Reading from the N-terminus, the 96-residue chain is Small ribosomal subunit protein uS19 (96 aa).

The protein belongs to the universal ribosomal protein uS19 family.

Its function is as follows. Protein S19 forms a complex with S13 that binds strongly to the 16S ribosomal RNA. The sequence is that of Small ribosomal subunit protein uS19 from Solibacter usitatus (strain Ellin6076).